A 338-amino-acid polypeptide reads, in one-letter code: Glycerol-3-phosphate dehydrogenase [NAD(P)+] (338 aa).

NADPH contacts are provided by Ser13, Trp14, and Lys108. Sn-glycerol 3-phosphate contacts are provided by Lys108, Gly139, and Ser141. Ala143 contacts NADPH. Sn-glycerol 3-phosphate contacts are provided by Lys194, Asp247, Ser257, Arg258, and Asn259. Lys194 serves as the catalytic Proton acceptor. Residue Arg258 coordinates NADPH. NADPH is bound by residues Val282 and Glu284.

The protein belongs to the NAD-dependent glycerol-3-phosphate dehydrogenase family.

The protein localises to the cytoplasm. It catalyses the reaction sn-glycerol 3-phosphate + NAD(+) = dihydroxyacetone phosphate + NADH + H(+). The catalysed reaction is sn-glycerol 3-phosphate + NADP(+) = dihydroxyacetone phosphate + NADPH + H(+). Its pathway is membrane lipid metabolism; glycerophospholipid metabolism. In terms of biological role, catalyzes the reduction of the glycolytic intermediate dihydroxyacetone phosphate (DHAP) to sn-glycerol 3-phosphate (G3P), the key precursor for phospholipid synthesis. The sequence is that of Glycerol-3-phosphate dehydrogenase [NAD(P)+] from Streptococcus agalactiae serotype V (strain ATCC BAA-611 / 2603 V/R).